The following is a 989-amino-acid chain: Phosphoenolpyruvate carboxylase (989 aa).

Catalysis depends on residues histidine 175 and lysine 630.

The protein belongs to the PEPCase type 1 family. Requires Mg(2+) as cofactor.

The enzyme catalyses oxaloacetate + phosphate = phosphoenolpyruvate + hydrogencarbonate. Its function is as follows. Forms oxaloacetate, a four-carbon dicarboxylic acid source for the tricarboxylic acid cycle. The protein is Phosphoenolpyruvate carboxylase of Prochlorococcus marinus (strain MIT 9301).